The following is a 228-amino-acid chain: L-ribulose-5-phosphate 4-epimerase UlaF (228 aa).

Substrate-binding positions include 26-27 (GN), 43-44 (SG), and 72-73 (SS). Zn(2+)-binding residues include D74, H93, and H95. D118 functions as the Proton donor/acceptor in the catalytic mechanism. H167 serves as a coordination point for Zn(2+). Y225 serves as the catalytic Proton donor/acceptor.

It belongs to the aldolase class II family. AraD/FucA subfamily. Zn(2+) serves as cofactor.

The enzyme catalyses L-ribulose 5-phosphate = D-xylulose 5-phosphate. Its pathway is cofactor degradation; L-ascorbate degradation; D-xylulose 5-phosphate from L-ascorbate: step 4/4. In terms of biological role, catalyzes the isomerization of L-ribulose 5-phosphate to D-xylulose 5-phosphate. Is involved in the anaerobic L-ascorbate utilization. The chain is L-ribulose-5-phosphate 4-epimerase UlaF from Salmonella paratyphi B (strain ATCC BAA-1250 / SPB7).